We begin with the raw amino-acid sequence, 629 residues long: tRNA uridine 5-carboxymethylaminomethyl modification enzyme MnmG (629 aa).

Residues 13–18, V125, and S180 each bind FAD; that span reads GGGHAG. 273–287 serves as a coordination point for NAD(+); it reads GPRYCPSIEDKVMRF. Position 370 (Q370) interacts with FAD.

Belongs to the MnmG family. As to quaternary structure, homodimer. Heterotetramer of two MnmE and two MnmG subunits. FAD is required as a cofactor.

The protein localises to the cytoplasm. NAD-binding protein involved in the addition of a carboxymethylaminomethyl (cmnm) group at the wobble position (U34) of certain tRNAs, forming tRNA-cmnm(5)s(2)U34. In Salmonella choleraesuis (strain SC-B67), this protein is tRNA uridine 5-carboxymethylaminomethyl modification enzyme MnmG.